The sequence spans 512 residues: Reduced folate transporter (512 aa).

Residue Met-1 is modified to N-acetylmethionine. Topologically, residues 1 to 29 are cytoplasmic; sequence MVPTGQVAEKQACEEPRQDRELKSWRWLV. A helical transmembrane segment spans residues 30–50; sequence FYLCFFGFMAQLRPGESFITP. Positions 48 and 49 each coordinate folate. The Extracellular portion of the chain corresponds to 51–62; it reads YLLERNFTKEQV. Asn-56 carries an N-linked (GlcNAc...) asparagine glycan. A helical transmembrane segment spans residues 63-85; it reads TNEIIPMLPYSHLAVLVPIFLLT. Over 86-89 the chain is Cytoplasmic; that stretch reads DYLR. A helical transmembrane segment spans residues 90-110; that stretch reads YKPVLVLQCLSFVCVWLLLLL. Topologically, residues 111 to 114 are extracellular; the sequence is GTSV. The helical transmembrane segment at 115-137 threads the bilayer; sequence VHMQLMEVFYSITMAARIAYSSY. Folate-binding residues include Glu-121 and Arg-131. The Cytoplasmic segment spans residues 138–151; that stretch reads IFSLVQPSRYQRMA. The chain crosses the membrane as a helical span at residues 152-176; that stretch reads SYSRAAVLLGVFISSVLGQVLVTLG. Val-162 contributes to the folate binding site. Topologically, residues 177 to 181 are extracellular; the sequence is GISTY. Residues 182-200 traverse the membrane as a helical segment; the sequence is MLNCISLGFILFSLSLSLF. The Cytoplasmic segment spans residues 201 to 266; sequence LKRPKRSLFF…ELVKNVRQPQ (66 aa). Residues 267-292 form a helical membrane-spanning segment; it reads LRLWCLWWVFNSAGYYLITYYVHVLW. Tyr-281, Tyr-282, and Tyr-286 together coordinate folate. The Extracellular portion of the chain corresponds to 293-300; the sequence is KITDSRLN. Residues 301–323 traverse the membrane as a helical segment; that stretch reads YNGAVDAASTLLSAITAFTAGFV. Residues 324–329 lie on the Cytoplasmic side of the membrane; sequence NIRWAL. The chain crosses the membrane as a helical span at residues 330 to 350; it reads WSKLVIASVIAIQAGLVFCMF. Residues 351-353 lie on the Extracellular side of the membrane; sequence QIP. A helical transmembrane segment spans residues 354 to 377; sequence DIWVCYVTFVLFRGAYQFLVPIAT. The folate site is built by Arg-366 and Gln-370. The Cytoplasmic segment spans residues 378-391; it reads FQIASSLSKELCAL. Residues 392 to 415 form a helical membrane-spanning segment; the sequence is VFGINTFLATALKTSITLVVSDKR. A required for substrate-binding region spans residues 400–412; sequence ATALKTSITLVVS. The Extracellular portion of the chain corresponds to 416–423; the sequence is GLGLQVHQ. The chain crosses the membrane as a helical span at residues 424 to 448; the sequence is QFRIYFMYFLTLSIICLAWAGLDGL. The Cytoplasmic segment spans residues 449–512; it reads RYYRRGRHQP…RADLRVEAKA (64 aa). Phosphoserine is present on residues Ser-466, Ser-471, and Ser-476. The interval 479–512 is disordered; it reads DGDLRRPQPSAPQLLPEDGSVEDGRADLRVEAKA. Over residues 500 to 512 the composition is skewed to basic and acidic residues; that stretch reads EDGRADLRVEAKA.

The protein belongs to the reduced folate carrier (RFC) transporter (TC 2.A.48) family. Expressed in liver, heart, brain, spleen, lung and skeletal muscle.

The protein localises to the cell membrane. It is found in the apical cell membrane. It localises to the basolateral cell membrane. The catalysed reaction is 5-amino-1-(5-phospho-beta-D-ribosyl)imidazole-4-carboxamide(in) + (6S)-5-methyl-5,6,7,8-tetrahydrofolate(out) = 5-amino-1-(5-phospho-beta-D-ribosyl)imidazole-4-carboxamide(out) + (6S)-5-methyl-5,6,7,8-tetrahydrofolate(in). Functionally, antiporter that mediates the import of reduced folates, driven by the export of organic anions. Also acts as an importer of immunoreactive cyclic dinucleotides, but with a lower transporter activity. Mechanistically, acts as a secondary active transporter, which exports intracellular organic anions down their concentration gradients to facilitate the uptake of its substrates. Has high affinity for N5-methyltetrahydrofolate, the predominant circulating form of folate. Also mediates the import of antifolate drug methotrexate. 5-amino-4-imidazolecarboxamide riboside (AICAR), when phosphorylated to AICAR monophosphate, can serve as an organic anion for antiporter activity. The polypeptide is Reduced folate transporter (Rattus norvegicus (Rat)).